The primary structure comprises 357 residues: DNA polymerase IV 2 (357 aa).

One can recognise a UmuC domain in the interval 4 to 184 (IIHVDMDAFY…LAVKKFHGVG (181 aa)). Positions 8 and 102 each coordinate Mg(2+). Glutamate 103 is an active-site residue.

This sequence belongs to the DNA polymerase type-Y family. Monomer. Mg(2+) is required as a cofactor.

Its subcellular location is the cytoplasm. The enzyme catalyses DNA(n) + a 2'-deoxyribonucleoside 5'-triphosphate = DNA(n+1) + diphosphate. Functionally, poorly processive, error-prone DNA polymerase involved in untargeted mutagenesis. Copies undamaged DNA at stalled replication forks, which arise in vivo from mismatched or misaligned primer ends. These misaligned primers can be extended by PolIV. Exhibits no 3'-5' exonuclease (proofreading) activity. May be involved in translesional synthesis, in conjunction with the beta clamp from PolIII. This Agrobacterium fabrum (strain C58 / ATCC 33970) (Agrobacterium tumefaciens (strain C58)) protein is DNA polymerase IV 2 (dinB2).